Reading from the N-terminus, the 302-residue chain is Zinc transporter ZIP1 (302 aa).

Residues 1–6 are Extracellular-facing; the sequence is MEYLLQ. Residues 7–27 form a helical membrane-spanning segment; that stretch reads VKIAALVGLLFLTLIFGFIPA. At 28–44 the chain is on the cytoplasmic side; the sequence is RVKWFRDTDGTETHRTV. Residues 45–65 form a helical membrane-spanning segment; sequence LSLISCFAGGVFLSACFLDII. Topologically, residues 66–80 are extracellular; the sequence is PDYLSDINTELHARQ. Residues 81–101 form a helical membrane-spanning segment; it reads LETSFPLPEFIMAAGFFTVLI. Residues 102–158 are Cytoplasmic-facing; sequence LERIVLNCKEMRATHEERTTLIPERKSGHGHGHGDGPDPESSGHHVHVDFQAHSPFR. Residues 123-145 form a disordered region; the sequence is IPERKSGHGHGHGDGPDPESSGH. The helical transmembrane segment at 159–179 threads the bilayer; sequence SFMLFLSLSLHSIFEGLAIGL. Topologically, residues 180-185 are extracellular; sequence QTTDPK. Residues 186–206 form a helical membrane-spanning segment; that stretch reads VVEICIAILVHKSIIVFSLAV. The Cytoplasmic segment spans residues 207–216; it reads KLVQSAIPPL. Residues 217-237 form a helical membrane-spanning segment; sequence WVAAYIGVFALMSPVGIAIGI. Over 238 to 251 the chain is Extracellular; sequence SVMEAQLAAGPLIQ. The helical transmembrane segment at 252–272 threads the bilayer; it reads AILEGFAAGTFVYITFLEILP. Topologically, residues 273–281 are cytoplasmic; that stretch reads HELNSPGKQ. Residues 282–302 form a helical membrane-spanning segment; that stretch reads LLKVLFLLLGFSIMAALSFLG.

It belongs to the ZIP transporter (TC 2.A.5) family. As to expression, highest levels in ovary, lower levels in intestine and gill, barely detected in kidney.

The protein resides in the cell membrane. Its subcellular location is the endoplasmic reticulum membrane. The catalysed reaction is Zn(2+)(in) = Zn(2+)(out). Functionally, transporter for the divalent cation Zn(2+). Mediates the influx of Zn(2+) into cells from extracellular space. The protein is Zinc transporter ZIP1 (slc39a1) of Takifugu rubripes (Japanese pufferfish).